Consider the following 536-residue polypeptide: Phosphoenolpyruvate carboxykinase (ATP) (536 aa).

Arg-61, Tyr-195, and Lys-201 together coordinate substrate. Residues Lys-201, His-220, and 236–244 (GLSGTGKTT) contribute to the ATP site. Mn(2+)-binding residues include Lys-201 and His-220. Asp-257 is a binding site for Mn(2+). Residues Glu-285, Arg-322, and Thr-447 each coordinate ATP. Arg-322 lines the substrate pocket.

Belongs to the phosphoenolpyruvate carboxykinase (ATP) family. It depends on Mn(2+) as a cofactor.

Its subcellular location is the cytoplasm. It catalyses the reaction oxaloacetate + ATP = phosphoenolpyruvate + ADP + CO2. Its pathway is carbohydrate biosynthesis; gluconeogenesis. Involved in the gluconeogenesis. Catalyzes the conversion of oxaloacetate (OAA) to phosphoenolpyruvate (PEP) through direct phosphoryl transfer between the nucleoside triphosphate and OAA. The protein is Phosphoenolpyruvate carboxykinase (ATP) of Rhizobium etli (strain ATCC 51251 / DSM 11541 / JCM 21823 / NBRC 15573 / CFN 42).